The following is a 120-amino-acid chain: Large ribosomal subunit protein bL19 (120 aa).

It belongs to the bacterial ribosomal protein bL19 family.

This protein is located at the 30S-50S ribosomal subunit interface and may play a role in the structure and function of the aminoacyl-tRNA binding site. This chain is Large ribosomal subunit protein bL19, found in Renibacterium salmoninarum (strain ATCC 33209 / DSM 20767 / JCM 11484 / NBRC 15589 / NCIMB 2235).